A 595-amino-acid chain; its full sequence is Isoprene synthase, chloroplastic (595 aa).

The transit peptide at 1 to 37 directs the protein to the chloroplast; that stretch reads MATELLCLHRPISLTHKLFRNPLPKVIQATPLTLKLR. D345 contacts dimethylallyl diphosphate. Residues D345 and D349 each contribute to the Mg(2+) site. The short motif at 345-349 is the DDXXD motif element; sequence DDIYD. The dimethylallyl diphosphate site is built by E423, R486, and N489. Mg(2+) contacts are provided by N489, S493, and E497.

The protein belongs to the terpene synthase family. Tpsb subfamily. Mg(2+) serves as cofactor. Predominantly expressed in leaves.

It is found in the plastid. The protein resides in the chloroplast. The enzyme catalyses dimethylallyl diphosphate = isoprene + diphosphate. Its pathway is terpene metabolism. In terms of biological role, lyase that catalyzes the formation of isoprene from dimethylallyl diphosphate, but not from isopentenyl diphosphate or geranyl diphosphate. The polypeptide is Isoprene synthase, chloroplastic (Populus alba (White poplar)).